Reading from the N-terminus, the 379-residue chain is Alcohol dehydrogenase 1 (379 aa).

Positions 47, 49, 69, 99, 102, 105, 113, and 177 each coordinate Zn(2+). An alcohol contacts are provided by Thr-49 and His-69. Thr-49 is a binding site for NAD(+). Residues 202–207 (GLGAVG), Asp-226, Arg-231, Thr-272, Val-295, 295–297 (VGV), Phe-322, and Arg-372 contribute to the NAD(+) site.

Belongs to the zinc-containing alcohol dehydrogenase family. As to quaternary structure, homodimer. Requires Zn(2+) as cofactor.

It is found in the cytoplasm. It carries out the reaction a primary alcohol + NAD(+) = an aldehyde + NADH + H(+). It catalyses the reaction a secondary alcohol + NAD(+) = a ketone + NADH + H(+). The sequence is that of Alcohol dehydrogenase 1 (ADH1) from Oryza sativa subsp. indica (Rice).